Consider the following 471-residue polypeptide: Ribulose bisphosphate carboxylase large chain (471 aa).

Position 5 is an N6,N6,N6-trimethyllysine (Lys5). Residues Asn114 and Thr164 each contribute to the substrate site. The active-site Proton acceptor is the Lys166. Position 168 (Lys168) interacts with substrate. Mg(2+) is bound by residues Lys192, Asp194, and Glu195. Lys192 carries the N6-carboxylysine modification. The active-site Proton acceptor is His285. Residues Arg286, His318, and Ser370 each coordinate substrate.

The protein belongs to the RuBisCO large chain family. Type I subfamily. Heterohexadecamer of 8 large chains and 8 small chains; disulfide-linked. The disulfide link is formed within the large subunit homodimers. Mg(2+) is required as a cofactor. The disulfide bond which can form in the large chain dimeric partners within the hexadecamer appears to be associated with oxidative stress and protein turnover.

Its subcellular location is the plastid. It localises to the chloroplast. It catalyses the reaction 2 (2R)-3-phosphoglycerate + 2 H(+) = D-ribulose 1,5-bisphosphate + CO2 + H2O. It carries out the reaction D-ribulose 1,5-bisphosphate + O2 = 2-phosphoglycolate + (2R)-3-phosphoglycerate + 2 H(+). RuBisCO catalyzes two reactions: the carboxylation of D-ribulose 1,5-bisphosphate, the primary event in carbon dioxide fixation, as well as the oxidative fragmentation of the pentose substrate in the photorespiration process. Both reactions occur simultaneously and in competition at the same active site. In Deppea grandiflora, this protein is Ribulose bisphosphate carboxylase large chain.